The primary structure comprises 118 residues: CLAVATA3/ESR (CLE)-related protein 12 (118 aa).

Residues 1–35 (MLRISSSSSMALKFSQILFIVLWLSLFFLLLHHLY) form the signal peptide. 2 stretches are compositionally biased toward basic and acidic residues: residues 75–91 (TPFH…RSGE) and 98–108 (IDPRYGVEKRR). Residues 75–118 (TPFHSRDNSRHNHRSGEQYDGDEIDPRYGVEKRRVPSGPNPLHH) are disordered. Pro110 and Pro113 each carry hydroxyproline. O-linked (Ara...) hydroxyproline glycosylation occurs at Pro113.

The protein belongs to the CLV3/ESR signal peptide family. Post-translationally, the O-glycosylation (arabinosylation) of the hydroxyproline Pro-113 enhances binding affinity of the CLE12p peptide for its receptor. Mostly expressed in seedlings, roots, flowers, stems and apex, and, to a lower extent, in leaves and siliques.

Its subcellular location is the secreted. It localises to the extracellular space. Its function is as follows. Extracellular signal peptide that regulates cell fate. Represses root apical meristem maintenance. This chain is CLAVATA3/ESR (CLE)-related protein 12, found in Arabidopsis thaliana (Mouse-ear cress).